The primary structure comprises 113 residues: Putative single-stranded DNA-binding protein ycf41 (113 aa).

In terms of domain architecture, SSB spans 1-101 (MNYASFIIKI…EVSGFKIYPF (101 aa)).

Its subcellular location is the plastid. The protein resides in the chloroplast. The sequence is that of Putative single-stranded DNA-binding protein ycf41 (ycf41) from Trieres chinensis (Marine centric diatom).